The primary structure comprises 359 residues: Protein RecA (359 aa).

Residue 74-81 (GPESSGKT) participates in ATP binding.

It belongs to the RecA family.

It localises to the cytoplasm. In terms of biological role, can catalyze the hydrolysis of ATP in the presence of single-stranded DNA, the ATP-dependent uptake of single-stranded DNA by duplex DNA, and the ATP-dependent hybridization of homologous single-stranded DNAs. It interacts with LexA causing its activation and leading to its autocatalytic cleavage. The polypeptide is Protein RecA (Anaplasma marginale (strain Florida)).